Here is a 289-residue protein sequence, read N- to C-terminus: Bis(5'-nucleosyl)-tetraphosphatase, symmetrical (289 aa).

Belongs to the Ap4A hydrolase family.

The catalysed reaction is P(1),P(4)-bis(5'-adenosyl) tetraphosphate + H2O = 2 ADP + 2 H(+). Hydrolyzes diadenosine 5',5'''-P1,P4-tetraphosphate to yield ADP. This chain is Bis(5'-nucleosyl)-tetraphosphatase, symmetrical, found in Pseudomonas fluorescens (strain ATCC BAA-477 / NRRL B-23932 / Pf-5).